The sequence spans 1095 residues: Formin-like protein 2 (1095 aa).

In terms of domain architecture, GBD/FH3 spans 23–469; it reads LPMPEPGELE…EAIQRQSTLE (447 aa). Residues 381 to 478 are a coiled coil; sequence LLEDAETKNA…EKKIHELEKQ (98 aa). The disordered stretch occupies residues 521-602; the sequence is PSSGPLPPPP…PSAPPLPGTS (82 aa). Pro residues-rich tracts occupy residues 524-534, 548-576, and 583-599; these read GPLPPPPPPLP, ATPP…PLPG, and PAPP…PPLP. The FH2 domain maps to 617-1008; the sequence is IKKPIKTKFR…LMEKLLEQEA (392 aa).

Belongs to the formin homology family. As to quaternary structure, interacts with TCP11L2; this interaction promotes muscle-derived satellite cell (MDSC) migration and differentiation.

Its subcellular location is the cytoplasm. Its function is as follows. Plays a role in the regulation of cell morphology and cytoskeletal organization. Required in the cortical actin filament dynamics. The protein is Formin-like protein 2 of Bos taurus (Bovine).